The primary structure comprises 683 residues: Methionine--tRNA ligase (683 aa).

The 'HIGH' region motif lies at 23-33; sequence PYANGSAHIGH. Zn(2+)-binding residues include Cys154, Cys157, Cys166, and Cys170. The 'KMSKS' region signature appears at 335–339; it reads KFSKS. ATP is bound at residue Lys338. The tRNA-binding domain occupies 583-683; sequence DFAKMELRVG…KPSEPGTKVR (101 aa).

It belongs to the class-I aminoacyl-tRNA synthetase family. MetG type 1 subfamily. As to quaternary structure, homodimer. Requires Zn(2+) as cofactor.

It localises to the cytoplasm. The enzyme catalyses tRNA(Met) + L-methionine + ATP = L-methionyl-tRNA(Met) + AMP + diphosphate. Is required not only for elongation of protein synthesis but also for the initiation of all mRNA translation through initiator tRNA(fMet) aminoacylation. The protein is Methionine--tRNA ligase of Methanocella arvoryzae (strain DSM 22066 / NBRC 105507 / MRE50).